Consider the following 103-residue polypeptide: UPF0473 protein SSA_2239 (103 aa).

Belongs to the UPF0473 family.

This Streptococcus sanguinis (strain SK36) protein is UPF0473 protein SSA_2239.